Consider the following 390-residue polypeptide: Altered inheritance of mitochondria protein 6 (390 aa).

Positions 1–17 are cleaved as a signal peptide; the sequence is MLGLKGCLTILIGYVIA.

Belongs to the AIM6 family.

This is Altered inheritance of mitochondria protein 6 from Saccharomyces cerevisiae (strain ATCC 204508 / S288c) (Baker's yeast).